Here is a 494-residue protein sequence, read N- to C-terminus: Aspartyl/glutamyl-tRNA(Asn/Gln) amidotransferase subunit B (494 aa).

Belongs to the GatB/GatE family. GatB subfamily. Heterotrimer of A, B and C subunits.

The enzyme catalyses L-glutamyl-tRNA(Gln) + L-glutamine + ATP + H2O = L-glutaminyl-tRNA(Gln) + L-glutamate + ADP + phosphate + H(+). The catalysed reaction is L-aspartyl-tRNA(Asn) + L-glutamine + ATP + H2O = L-asparaginyl-tRNA(Asn) + L-glutamate + ADP + phosphate + 2 H(+). Its function is as follows. Allows the formation of correctly charged Asn-tRNA(Asn) or Gln-tRNA(Gln) through the transamidation of misacylated Asp-tRNA(Asn) or Glu-tRNA(Gln) in organisms which lack either or both of asparaginyl-tRNA or glutaminyl-tRNA synthetases. The reaction takes place in the presence of glutamine and ATP through an activated phospho-Asp-tRNA(Asn) or phospho-Glu-tRNA(Gln). The sequence is that of Aspartyl/glutamyl-tRNA(Asn/Gln) amidotransferase subunit B from Nitrobacter winogradskyi (strain ATCC 25391 / DSM 10237 / CIP 104748 / NCIMB 11846 / Nb-255).